Reading from the N-terminus, the 418-residue chain is Major capsid protein (418 aa).

As to quaternary structure, multimerizes.

Its subcellular location is the virion. The most highly expressed virion protein; probably the major capsid protein. In Pseudomonas phage PaMx41, this protein is Major capsid protein.